Consider the following 265-residue polypeptide: tRNA (guanine-N(1)-)-methyltransferase (265 aa).

Residues glycine 110 and 129 to 134 (LGDFVM) each bind S-adenosyl-L-methionine. A disordered region spans residues 243-265 (LAAWGAPPPPLPKRRRGAKPNPN). Residues 254–265 (PKRRRGAKPNPN) are compositionally biased toward basic residues.

This sequence belongs to the RNA methyltransferase TrmD family. Homodimer.

It localises to the cytoplasm. It carries out the reaction guanosine(37) in tRNA + S-adenosyl-L-methionine = N(1)-methylguanosine(37) in tRNA + S-adenosyl-L-homocysteine + H(+). Functionally, specifically methylates guanosine-37 in various tRNAs. The sequence is that of tRNA (guanine-N(1)-)-methyltransferase from Deinococcus geothermalis (strain DSM 11300 / CIP 105573 / AG-3a).